Reading from the N-terminus, the 975-residue chain is Protein cramped (975 aa).

Disordered regions lie at residues 1–37, 71–111, 318–346, 403–450, and 809–844; these read MEEL…GGGA, QKMK…GSGK, AIFP…PSVA, PVAA…LMKM, and PIDR…QEPG. Residues 7-20 show a composition bias toward pro residues; the sequence is QPPPPPPLPPPPSS. Positions 86–98 are enriched in basic and acidic residues; sequence SEREPNKKEEKAA. Polar residues predominate over residues 100–111; the sequence is KTPSQLKTGSGK. An SANT domain is found at 109–173; it reads SGKTTWTNVE…HYYQTYHKIC (65 aa). Residues 410–425 are compositionally biased toward basic and acidic residues; that stretch reads LRTESGSEKRSPETKK. Low complexity predominate over residues 815 to 833; sequence GTSSGGISSSGSKPDSSMG.

Belongs to the cramped family.

The protein localises to the nucleus. Functionally, polycomb group (Pc-G) genes are needed to maintain expression patterns of the homeotic selector genes of the Antennapedia (Antp-C) and Bithorax (Bx-C) complexes, and hence for the maintenance of segmental determination. Can act as a modifier of position effect variegation (PEV). This chain is Protein cramped (crm), found in Drosophila sechellia (Fruit fly).